Reading from the N-terminus, the 955-residue chain is Vacuolar membrane protease (955 aa).

Topologically, residues 1–16 are cytoplasmic; the sequence is MASLRLPRANPLAFTR. The chain crosses the membrane as a helical span at residues 17 to 37; it reads WPVTVITAIVYLALLIPLLVV. The Vacuolar segment spans residues 38-390; it reads HHVVPSAPSS…STFVLFQLHT (353 aa). Residues Asn53 and Asn119 are each glycosylated (N-linked (GlcNAc...) asparagine). 2 residues coordinate Zn(2+): His174 and Asp186. Glu220 functions as the Proton acceptor in the catalytic mechanism. Zn(2+)-binding residues include Glu221, Glu246, and His319. A helical membrane pass occupies residues 391–411; it reads LFALLVTLLIVGPLTLLFTSI. At 412–442 the chain is on the cytoplasmic side; sequence ALTKADKMYLFRSSAKSEDRLDVVPLQGLRG. A helical membrane pass occupies residues 443–463; sequence FFRFPFLFGIPTVVTVGLAYL. Residues 464-473 lie on the Vacuolar side of the membrane; it reads VTKVNPYIIH. A helical transmembrane segment spans residues 474 to 494; that stretch reads SSAYAVWSMMVAAWVFLAWFV. Residues 495-508 lie on the Cytoplasmic side of the membrane; it reads SRVADFARPSAFHR. Residues 509–529 form a helical membrane-spanning segment; sequence IYTLTWMYVLSWVSAVIATVY. The Vacuolar portion of the chain corresponds to 530-533; it reads ANQR. Residues 534–554 traverse the membrane as a helical segment; it reads GLAGGYFIFFFHAGIFLAKWI. Residues 555–656 are Cytoplasmic-facing; it reads SYLELFALPS…WSYALPKWTW (102 aa). Residues 574–590 show a composition bias toward low complexity; the sequence is SASGRASGHGSRRGTTS. Positions 574-611 are disordered; sequence SASGRASGHGSRRGTTSGEDDGEEAEEEPTESTSLLGS. Residues 591–603 are compositionally biased toward acidic residues; it reads GEDDGEEAEEEPT. The helical transmembrane segment at 657 to 677 threads the bilayer; sequence VLQLLLTAPITLIMVGPLALL. The Vacuolar portion of the chain corresponds to 678–693; sequence TISAISQTGQDGGHPL. A helical membrane pass occupies residues 694–714; sequence FAYVAIAIFTTIMLTPLLPFI. The Cytoplasmic segment spans residues 715–721; it reads HRYTYHV. Residues 722–742 form a helical membrane-spanning segment; sequence PLFLLAVFLGTLIYNLVAFPF. Residues 743-955 are Vacuolar-facing; it reads SDSNRLKLYY…RRAFEIGNDD (213 aa). Residue Asn826 is glycosylated (N-linked (GlcNAc...) asparagine).

This sequence belongs to the peptidase M28 family. It depends on Zn(2+) as a cofactor.

It is found in the vacuole membrane. May be involved in vacuolar sorting and osmoregulation. This is Vacuolar membrane protease from Aspergillus oryzae (strain ATCC 42149 / RIB 40) (Yellow koji mold).